The following is a 661-amino-acid chain: Fructose-1,6-bisphosphatase class 3 (661 aa).

Belongs to the FBPase class 3 family. The cofactor is Mn(2+).

The enzyme catalyses beta-D-fructose 1,6-bisphosphate + H2O = beta-D-fructose 6-phosphate + phosphate. It functions in the pathway carbohydrate biosynthesis; gluconeogenesis. This chain is Fructose-1,6-bisphosphatase class 3, found in Clostridioides difficile (strain 630) (Peptoclostridium difficile).